Here is a 365-residue protein sequence, read N- to C-terminus: MTGSVPIVDLEAWRAADEENRASLAEIIDGALHTVGTFLLAGHGVPAELTARMRTAGRSFFDLPWEKKEPHAVQRPHDNGWRGLVKHRTDTIEGTGGAPDLHEAFHMGPTHRTGDDAFDALYYPANKWPAELPELRETALAYTAHMTRVAGAVMEMLAGVLGLEPAFFTSRCEHATWTQSVNWYPSLDTVGQTAEGQMRVGPHTDFGTITLLDRQQGVSGLEVWSEEDGWFAPPFVEGTLLVNLGDLMHQWTDGRWRSLRHRVLAPSASAPQEELVSLVYFFDADPEAELVPLAAPVGGGAGMPTVNVGETILKKNIQMLTDLKGHGLFQGELSLSRPGSADSPGSSPADDHPSRPGRHPAQGPQ.

Positions H174–A284 constitute a Fe2OG dioxygenase domain. Fe cation is bound by residues H203, D205, and H261. The disordered stretch occupies residues G331–Q365. The span at S336–P348 shows a compositional bias: low complexity.

The protein belongs to the iron/ascorbate-dependent oxidoreductase family. Fe(2+) serves as cofactor.

The catalysed reaction is validamycin A + 2-oxoglutarate + O2 = validamycin B + succinate + CO2 + H(+). It catalyses the reaction validoxylamine A + 2-oxoglutarate + O2 = validoxylamine B + succinate + CO2 + H(+). The protein operates within antibiotic biosynthesis. Its function is as follows. Involved in the biosynthesis of validamycin B, a component of the antifungal and antibiotic validamycin complex used as a crop protectant. Catalyzes the regioselective hydroxylation of validamycin A (4-O-beta-D-glucopyranosyl-validoxylamine A) at the C-6 position to yield validamycin B. To a lesser extent, also able to convert validoxylamine A to its hydroxylated derivative. This is Validamycin A dioxygenase from Streptomyces hygroscopicus subsp. limoneus.